The chain runs to 318 residues: Probable 3-hydroxyisobutyrate dehydrogenase-like 3, mitochondrial (318 aa).

Residues 35–64 and Ser-129 each bind NAD(+); that span reads TRIG…TVYA. The active site involves Lys-203. NAD(+) is bound at residue Lys-271.

The protein belongs to the HIBADH-related family. 3-hydroxyisobutyrate dehydrogenase subfamily.

The protein resides in the mitochondrion. It catalyses the reaction 3-hydroxy-2-methylpropanoate + NAD(+) = 2-methyl-3-oxopropanoate + NADH + H(+). It participates in amino-acid degradation; L-valine degradation. This is Probable 3-hydroxyisobutyrate dehydrogenase-like 3, mitochondrial from Arabidopsis thaliana (Mouse-ear cress).